A 518-amino-acid polypeptide reads, in one-letter code: Chromosomal replication initiator protein DnaA (518 aa).

A domain I, interacts with DnaA modulators region spans residues 1–72 (MTLAEFWPLC…VREELAAGRS (72 aa)). The tract at residues 72–180 (SAFVFKPGEG…DAEEARYEQT (109 aa)) is domain II. A domain III, AAA+ region region spans residues 181-397 (NLSPDYTFDT…GAFNRVGASS (217 aa)). ATP is bound by residues G225, G227, K228, and T229. Residues 398-518 (RFMNRPVIDI…YEKLLILIQN (121 aa)) are domain IV, binds dsDNA.

The protein belongs to the DnaA family. In terms of assembly, oligomerizes as a right-handed, spiral filament on DNA at oriC.

The protein localises to the cytoplasm. Its function is as follows. Plays an essential role in the initiation and regulation of chromosomal replication. ATP-DnaA binds to the origin of replication (oriC) to initiate formation of the DNA replication initiation complex once per cell cycle. Binds the DnaA box (a 9 base pair repeat at the origin) and separates the double-stranded (ds)DNA. Forms a right-handed helical filament on oriC DNA; dsDNA binds to the exterior of the filament while single-stranded (ss)DNA is stabiized in the filament's interior. The ATP-DnaA-oriC complex binds and stabilizes one strand of the AT-rich DNA unwinding element (DUE), permitting loading of DNA polymerase. After initiation quickly degrades to an ADP-DnaA complex that is not apt for DNA replication. Binds acidic phospholipids. This Neisseria meningitidis serogroup C / serotype 2a (strain ATCC 700532 / DSM 15464 / FAM18) protein is Chromosomal replication initiator protein DnaA.